A 712-amino-acid polypeptide reads, in one-letter code: Phosphatase and actin regulator 4 (712 aa).

Disordered regions lie at residues 1–22 (MGQA…GQPT) and 90–405 (RGLL…EVPK). One copy of the RPEL 1 repeat lies at 72 to 97 (EVLERKISMRKPREELVKRGLLLEDS). The span at 114-124 (NGHTTLIGSTR) shows a compositional bias: polar residues. Residues serine 125, serine 127, serine 140, and serine 156 each carry the phosphoserine modification. Residues 136-152 (ERIASLRKPVPEEEPKK) are compositionally biased toward basic and acidic residues. Residues 198–230 (ATSSGSLARPSSSASTTAITTAPAATMAATNPA) are compositionally biased toward low complexity. The span at 233–243 (VHSSGPPSQAP) shows a compositional bias: polar residues. Positions 245-267 (TLPAAPASTHTTATLSLTHTGPA) are enriched in low complexity. A phosphoserine mark is found at serine 282, serine 303, and serine 353. Low complexity predominate over residues 345 to 357 (SEPLLTPSSSPLP). Pro residues predominate over residues 358–371 (AHIPPEPPQSPPFP). Serine 436 bears the Phosphoserine mark. Threonine 441 is modified (phosphothreonine). Phosphoserine occurs at positions 452, 462, 473, 524, 526, 567, and 600. Residues 507–557 (VIPKLPQCLQEEEEGKESDSDSEGPIQYRDEEDEDESHHSALANKVKRKDT) form a disordered region. The span at 516-528 (QEEEEGKESDSDS) shows a compositional bias: acidic residues. RPEL repeat units lie at residues 593 to 618 (NTLI…QPKN) and 631 to 656 (RRLT…RFNE). The disordered stretch occupies residues 602–626 (RPTPEELEQRNILQPKNEADRQAEK). Position 638 is a phosphoserine (serine 638).

This sequence belongs to the phosphatase and actin regulator family. Binds PPP1CA and actin.

Its subcellular location is the cytoplasm. The protein resides in the cell projection. It localises to the lamellipodium. In terms of biological role, regulator of protein phosphatase 1 (PP1) required for neural tube and optic fissure closure, and enteric neural crest cell (ENCCs) migration during development. Acts as an activator of PP1 by interacting with PPP1CA and preventing phosphorylation of PPP1CA at 'Thr-320'. During neural tube closure, localizes to the ventral neural tube and activates PP1, leading to down-regulate cell proliferation within cranial neural tissue and the neural retina. Also acts as a regulator of migration of enteric neural crest cells (ENCCs) by activating PP1, leading to dephosphorylation and subsequent activation of cofilin (COF1 or COF2) and repression of the integrin signaling through the RHO/ROCK pathway. This chain is Phosphatase and actin regulator 4 (PHACTR4), found in Bos taurus (Bovine).